Here is a 63-residue protein sequence, read N- to C-terminus: Large ribosomal subunit protein uL29 (63 aa).

It belongs to the universal ribosomal protein uL29 family.

The sequence is that of Large ribosomal subunit protein uL29 from Photobacterium profundum (strain SS9).